Reading from the N-terminus, the 1456-residue chain is ABC transporter G family member 44 (1456 aa).

The region spanning 169–442 (ANLLHVVPNK…FESMGFKCPD (274 aa)) is the ABC transporter 1 domain. 202–209 (GPPGSGKT) provides a ligand contact to ATP. In terms of domain architecture, ABC transmembrane type-2 1 spans 520–733 (ELLRTCIARE…AMNAIAVNEF (214 aa)). 6 consecutive transmembrane segments (helical) span residues 538 to 558 (FVYR…MTLF), 571 to 591 (GIVY…NGFS), 626 to 646 (IPIS…VIGF), 658 to 678 (LLLL…AALG), 682 to 702 (VVAN…SGFI), and 768 to 788 (IGVG…TIAL). The segment at 812 to 844 (NITGETINDPRNSASSGQTTNTRRNAAPGEASE) is disordered. Residues 814–835 (TGETINDPRNSASSGQTTNTRR) are compositionally biased toward polar residues. Residues 858-1110 (VAFNNIRYSV…DLIEYFEGVE (253 aa)) form the ABC transporter 2 domain. 903–910 (GVSGAGKT) lines the ATP pocket. Residues 1183-1397 (TQCMACLWKQ…TLYGLVASQF (215 aa)) enclose the ABC transmembrane type-2 2 domain. 7 consecutive transmembrane segments (helical) span residues 1202-1222 (YTVV…TIFW), 1242-1262 (YAAV…VVAV), 1290-1310 (LPYV…MIGF), 1317-1337 (FFWY…YGML), 1347-1367 (IASI…GFVI), 1378-1398 (WYSW…SQFG), and 1425-1445 (FLGV…VSFS).

The protein belongs to the ABC transporter superfamily. ABCG family. PDR (TC 3.A.1.205) subfamily.

It localises to the membrane. Functionally, may be a general defense protein. This Oryza sativa subsp. japonica (Rice) protein is ABC transporter G family member 44.